Consider the following 1008-residue polypeptide: Collagen alpha-2(I) chain (1008 aa).

Positions 1 to 999 (GGFDFSFLPQ…IRGSGGGYDF (999 aa)) are disordered. 4-hydroxyproline occurs at positions 9, 12, 45, and 51. The segment covering 38–81 (LMGPRGPPGASGAPGPQGFPAGEPGEPGQTGPAGARGPAGPPGK) has biased composition (low complexity). A compositionally biased stretch (basic and acidic residues) spans 82–94 (ADGHPGKPGRPGE). A 5-hydroxylysine; alternate modification is found at Lys116. Lys116 carries an O-linked (Gal...) hydroxylysine; alternate glycan. 3 stretches are compositionally biased toward low complexity: residues 164–193 (VGAP…SAGP), 239–260 (PGAN…AGAP), and 301–314 (EPGS…PGSS). A compositionally biased stretch (gly residues) spans 336 to 345 (GLRGGPGSRG). Over residues 358–374 (PAGARGASGPAGVRGPS) the composition is skewed to low complexity. A 4-hydroxyproline mark is found at Pro380 and Pro383. Positions 409-428 (LPGIDGRPGPIGPAGARGEA) are enriched in low complexity. A compositionally biased stretch (gly residues) spans 455-466 (GNRGQGGKGEQG). Low complexity-rich tracts occupy residues 513 to 530 (PGES…SRGP) and 542 to 552 (EPGVVGAPGTA). A compositionally biased stretch (gly residues) spans 553–562 (GPAGSGGLPG). Composition is skewed to low complexity over residues 582–629 (RGEV…PRGS) and 636–656 (VGPA…QPGA). Positions 657–666 (KGERGTKGPK) are enriched in basic and acidic residues. The segment covering 674–684 (PTGPVGSAGPA) has biased composition (low complexity). Over residues 694-703 (GSRGDGGPPG) the composition is skewed to gly residues. Low complexity predominate over residues 704 to 714 (ATGFPGAAGRT). Positions 751–760 (GETGAGGPPG) are enriched in gly residues. Composition is skewed to low complexity over residues 768-795 (SGEP…LGLP), 803-813 (LPGVAGAVGEP), 826-842 (PPGA…PGNP), 862-884 (YAGN…VGPA), and 892-907 (EPGP…ALGP). Residues 917-928 (RGDKGEPGDKGP) are compositionally biased toward basic and acidic residues. Positions 989–998 (GIRGSGGGYD) are enriched in gly residues.

It belongs to the fibrillar collagen family. In terms of assembly, trimers of one alpha 2(I) and two alpha 1(I) chains. Interacts (via C-terminus) with TMEM131 (via PapD-L domain); the interaction is direct and is involved in assembly and TRAPPIII ER-to-Golgi transport complex-dependent secretion of collagen. In terms of processing, prolines at the third position of the tripeptide repeating unit (G-X-Y) are hydroxylated in some or all of the chains. As to expression, expressed in bones.

The protein localises to the secreted. Its subcellular location is the extracellular space. The protein resides in the extracellular matrix. In terms of biological role, type I collagen is a member of group I collagen (fibrillar forming collagen). This is Collagen alpha-2(I) chain from Nothrotheriops shastensis (Shasta ground sloth).